The primary structure comprises 712 residues: Frizzled-6 (712 aa).

Residues 1–18 (MEMFTFLLTCVFLPFVRG) form the signal peptide. One can recognise an FZ domain in the interval 19–132 (HSLFTCEPIT…CDRLQYCDET (114 aa)). Residues 19 to 201 (HSLFTCEPIT…SDELEFAKSF (183 aa)) lie on the Extracellular side of the membrane. 5 disulfides stabilise this stretch: C24–C85, C32–C78, C69–C106, C95–C129, and C99–C123. N38 is a glycosylation site (N-linked (GlcNAc...) asparagine). A helical membrane pass occupies residues 202-222 (IGIVSIFCLCATLFTFLTFLI). At 223–233 (DVKRFRYPERP) the chain is on the cytoplasmic side. The chain crosses the membrane as a helical span at residues 234–254 (IIYYSVCYSIVSLMYFIGFLL). Residues 255 to 284 (GDRTACNKADEKLELGDTVVLGSQNKACTV) lie on the Extracellular side of the membrane. Residues 285–305 (LFMFLYFFTMAGTVWWVILTI) form a helical membrane-spanning segment. The Cytoplasmic portion of the chain corresponds to 306-324 (TWFLAAGRKWSCEAIEQKA). Residues 325–345 (VWFHAVAWGIPGFLTVMLLAM) traverse the membrane as a helical segment. The Extracellular portion of the chain corresponds to 346–370 (NKVEGDNISGVCFVGLYDLDASRYF). N352 carries N-linked (GlcNAc...) asparagine glycosylation. Residues 371–391 (VLLPLCLCVFVGLSLLLAGII) traverse the membrane as a helical segment. The Cytoplasmic segment spans residues 392–416 (SLNHVRQVIQHDGRNQEKLKKFMIR). A helical transmembrane segment spans residues 417 to 437 (IGVFSGLYLVPLVTLLGCYVY). At 438–473 (EQVNRITWEITWVSDHCRQYHIPCPYQAKTETRPEL) the chain is on the extracellular side. A helical transmembrane segment spans residues 474-494 (ALFMIKYLMTLIVGISAVFWV). The Cytoplasmic segment spans residues 495–712 (GSKKTCTEWA…EHGTGSHSDT (218 aa)). The Lys-Thr-X-X-X-Trp motif, mediates interaction with the PDZ domain of Dvl family members motif lies at 498–503 (KTCTEW). The tract at residues 588 to 712 (EIQTSPETSV…EHGTGSHSDT (125 aa)) is disordered. Composition is skewed to basic and acidic residues over residues 628–637 (LCEEQADRKG) and 652–664 (TRSEGRVTPKSDV). The span at 668-693 (GPMQSSSLQVPGSSEPGSLKGSTSLL) shows a compositional bias: polar residues. The segment covering 700-712 (GRKEHGTGSHSDT) has biased composition (basic and acidic residues).

The protein belongs to the G-protein coupled receptor Fz/Smo family. Interacts with LMBR1L. In terms of processing, ubiquitinated by ZNRF3, leading to its degradation by the proteasome.

The protein resides in the membrane. Its subcellular location is the cell membrane. It localises to the cell surface. The protein localises to the apical cell membrane. It is found in the cytoplasmic vesicle membrane. The protein resides in the endoplasmic reticulum membrane. Receptor for Wnt proteins. Most of frizzled receptors are coupled to the beta-catenin canonical signaling pathway, which leads to the activation of disheveled proteins, inhibition of GSK-3 kinase, nuclear accumulation of beta-catenin and activation of Wnt target genes. A second signaling pathway involving PKC and calcium fluxes has been seen for some family members, but it is not yet clear if it represents a distinct pathway or if it can be integrated in the canonical pathway, as PKC seems to be required for Wnt-mediated inactivation of GSK-3 kinase. Both pathways seem to involve interactions with G-proteins. Activation by Wnt5A stimulates PKC activity via a G-protein-dependent mechanism. Involved in transduction and intercellular transmission of polarity information during tissue morphogenesis and/or in differentiated tissues. Together with FZD3, is involved in the neural tube closure and plays a role in the regulation of the establishment of planar cell polarity (PCP), particularly in the orientation of asymmetric bundles of stereocilia on the apical faces of a subset of auditory and vestibular sensory cells located in the inner ear. The sequence is that of Frizzled-6 (FZD6) from Canis lupus familiaris (Dog).